A 562-amino-acid chain; its full sequence is Dihydroxy-acid dehydratase (562 aa).

Cys-51 contributes to the [2Fe-2S] cluster binding site. Asp-83 serves as a coordination point for Mg(2+). [2Fe-2S] cluster is bound at residue Cys-124. Residues Asp-125 and Lys-126 each contribute to the Mg(2+) site. An N6-carboxylysine modification is found at Lys-126. Position 196 (Cys-196) interacts with [2Fe-2S] cluster. Glu-448 serves as a coordination point for Mg(2+). Ser-474 acts as the Proton acceptor in catalysis.

The protein belongs to the IlvD/Edd family. In terms of assembly, homodimer. It depends on [2Fe-2S] cluster as a cofactor. Mg(2+) serves as cofactor.

It carries out the reaction (2R)-2,3-dihydroxy-3-methylbutanoate = 3-methyl-2-oxobutanoate + H2O. The enzyme catalyses (2R,3R)-2,3-dihydroxy-3-methylpentanoate = (S)-3-methyl-2-oxopentanoate + H2O. It participates in amino-acid biosynthesis; L-isoleucine biosynthesis; L-isoleucine from 2-oxobutanoate: step 3/4. The protein operates within amino-acid biosynthesis; L-valine biosynthesis; L-valine from pyruvate: step 3/4. In terms of biological role, functions in the biosynthesis of branched-chain amino acids. Catalyzes the dehydration of (2R,3R)-2,3-dihydroxy-3-methylpentanoate (2,3-dihydroxy-3-methylvalerate) into 2-oxo-3-methylpentanoate (2-oxo-3-methylvalerate) and of (2R)-2,3-dihydroxy-3-methylbutanoate (2,3-dihydroxyisovalerate) into 2-oxo-3-methylbutanoate (2-oxoisovalerate), the penultimate precursor to L-isoleucine and L-valine, respectively. The chain is Dihydroxy-acid dehydratase from Pyrobaculum aerophilum (strain ATCC 51768 / DSM 7523 / JCM 9630 / CIP 104966 / NBRC 100827 / IM2).